A 277-amino-acid polypeptide reads, in one-letter code: Ribonuclease HII (277 aa).

The segment at 1–32 (MIRNQANKPGRAKAATAARKSPLTKSAAKPAA) is disordered. Positions 20–32 (KSPLTKSAAKPAA) are enriched in low complexity. In terms of domain architecture, RNase H type-2 spans 64-252 (WPVAGCDEAG…VVAARRKHQP (189 aa)). Asp70, Glu71, and Asp161 together coordinate a divalent metal cation.

The protein belongs to the RNase HII family. Requires Mn(2+) as cofactor. The cofactor is Mg(2+).

It is found in the cytoplasm. The catalysed reaction is Endonucleolytic cleavage to 5'-phosphomonoester.. Endonuclease that specifically degrades the RNA of RNA-DNA hybrids. This Bradyrhizobium sp. (strain ORS 278) protein is Ribonuclease HII.